The primary structure comprises 121 residues: Large ribosomal subunit protein bL20 (121 aa).

It belongs to the bacterial ribosomal protein bL20 family.

Functionally, binds directly to 23S ribosomal RNA and is necessary for the in vitro assembly process of the 50S ribosomal subunit. It is not involved in the protein synthesizing functions of that subunit. This chain is Large ribosomal subunit protein bL20, found in Methylorubrum extorquens (strain PA1) (Methylobacterium extorquens).